A 291-amino-acid chain; its full sequence is Lactoylglutathione lyase (291 aa).

VOC domains lie at 24–149 (RLLH…LIQR) and 155–283 (PLCQ…LVDN). The substrate site is built by Arg-31, Asn-82, and His-96. Residue His-96 is part of the active site. Glu-145 serves as the catalytic Proton donor/acceptor. Glu-145 lines the Ni(2+) pocket. Residues Gln-158 and Glu-209 contribute to the active site. Glu-209 contacts Ni(2+).

Belongs to the glyoxalase I family. Monomer. Ni(2+) is required as a cofactor. In terms of processing, phosphorylated after gibberellin treatment. In terms of tissue distribution, expressed in callus, stem, leaves, panicles and maturing seeds (at protein level).

The enzyme catalyses (R)-S-lactoylglutathione = methylglyoxal + glutathione. The protein operates within secondary metabolite metabolism; methylglyoxal degradation; (R)-lactate from methylglyoxal: step 1/2. In terms of biological role, catalyzes the conversion of hemimercaptal, formed from methylglyoxal and glutathione, to S-lactoylglutathione. Involved in the detoxifiation of methylglyoxal. Can functionally complement growth defect of a yeast mutant lacking GLY I. Involved in abiotic stress response. Over-expression of GLYI-11 in tobacco increases tolerance to osmotic, oxidative and salt stresses. The sequence is that of Lactoylglutathione lyase from Oryza sativa subsp. japonica (Rice).